A 396-amino-acid polypeptide reads, in one-letter code: MGWKTLDDMDLQGKSVLTRVDINVPMEDGKVTDDTRIRRLVPTISDLLSKGAKPVLLAHFGRPKGKVVPEMSLQPLVPALEAAFGAPVMFVADCRGPAAKGAVDALAPGQILLLENTRFYPGEEQNDADLAKEMAALGDIYCNDAFSAAHRAHASTEALARLLPACAGRLMEAELKALEGSLATPERPVTAVVGGAKVSTKLDLLGNLVAKVDTLVIGGGMANTFLAAQGIDVGKSLCEHDMTGTAKDIMARAEAAGCTILLPSDVVVAREFKAGADNETVPADACPADAMILDAGPASVAAISTVFAESKTLIWNGPLGAFEIAPFDIATNTAAQKAAELTKAGQLISVAGGGDTVAALNQAGAAEAFSYISTAGGAFLEWMEGKVLPGVAALQT.

Residues 21–23 (DIN), Arg-36, 59–62 (HFGR), Arg-118, and Arg-151 contribute to the substrate site. ATP-binding positions include Lys-201, Glu-323, and 353–356 (GGDT).

It belongs to the phosphoglycerate kinase family. Monomer.

It is found in the cytoplasm. The catalysed reaction is (2R)-3-phosphoglycerate + ATP = (2R)-3-phospho-glyceroyl phosphate + ADP. It functions in the pathway carbohydrate degradation; glycolysis; pyruvate from D-glyceraldehyde 3-phosphate: step 2/5. The chain is Phosphoglycerate kinase from Ruegeria sp. (strain TM1040) (Silicibacter sp.).